The primary structure comprises 225 residues: Peptidyl-tRNA hydrolase (225 aa).

Tyr-14 contacts tRNA. His-19 (proton acceptor) is an active-site residue. The tRNA site is built by Phe-64, Asn-66, and Asn-112. Residues 184–225 (ALRMQPPKPEKPKPAAKAPEAQAPEAAPDARSALQKLADRFR) form a disordered region. Residues 198–210 (AAKAPEAQAPEAA) show a composition bias toward low complexity.

This sequence belongs to the PTH family. As to quaternary structure, monomer.

The protein resides in the cytoplasm. It catalyses the reaction an N-acyl-L-alpha-aminoacyl-tRNA + H2O = an N-acyl-L-amino acid + a tRNA + H(+). Functionally, hydrolyzes ribosome-free peptidyl-tRNAs (with 1 or more amino acids incorporated), which drop off the ribosome during protein synthesis, or as a result of ribosome stalling. Its function is as follows. Catalyzes the release of premature peptidyl moieties from peptidyl-tRNA molecules trapped in stalled 50S ribosomal subunits, and thus maintains levels of free tRNAs and 50S ribosomes. The polypeptide is Peptidyl-tRNA hydrolase (Cereibacter sphaeroides (strain KD131 / KCTC 12085) (Rhodobacter sphaeroides)).